The primary structure comprises 527 residues: Formate--tetrahydrofolate ligase (527 aa).

Residue 53-60 (TSSGEGKT) participates in ATP binding.

The protein belongs to the formate--tetrahydrofolate ligase family.

The enzyme catalyses (6S)-5,6,7,8-tetrahydrofolate + formate + ATP = (6R)-10-formyltetrahydrofolate + ADP + phosphate. The protein operates within one-carbon metabolism; tetrahydrofolate interconversion. In Acholeplasma laidlawii (strain PG-8A), this protein is Formate--tetrahydrofolate ligase.